The sequence spans 96 residues: ESAT-6-like protein SAG0230 (96 aa).

It belongs to the WXG100 family. sagEsxA-like subfamily. As to quaternary structure, homodimer.

This Streptococcus agalactiae serotype V (strain ATCC BAA-611 / 2603 V/R) protein is ESAT-6-like protein SAG0230.